A 431-amino-acid polypeptide reads, in one-letter code: Na(+)-translocating NADH-quinone reductase subunit F (431 aa).

Residues 9-29 (FICIASLIFCAIGVILAGVIL) traverse the membrane as a helical segment. In terms of domain architecture, 2Fe-2S ferredoxin-type spans 39–133 (HPCKLKINDN…DMSLEIEERY (95 aa)). 4 residues coordinate [2Fe-2S] cluster: Cys76, Cys82, Cys85, and Cys117. An FAD-binding FR-type domain is found at 136-286 (ASSWEGTVIS…SGPYGESFMK (151 aa)). The catalytic stretch occupies residues 289–413 (DRPLIFLIGG…PLHNSSILKL (125 aa)).

This sequence belongs to the NqrF family. As to quaternary structure, composed of six subunits; NqrA, NqrB, NqrC, NqrD, NqrE and NqrF. Requires [2Fe-2S] cluster as cofactor. It depends on FAD as a cofactor.

The protein resides in the cell inner membrane. It catalyses the reaction a ubiquinone + n Na(+)(in) + NADH + H(+) = a ubiquinol + n Na(+)(out) + NAD(+). NQR complex catalyzes the reduction of ubiquinone-1 to ubiquinol by two successive reactions, coupled with the transport of Na(+) ions from the cytoplasm to the periplasm. The first step is catalyzed by NqrF, which accepts electrons from NADH and reduces ubiquinone-1 to ubisemiquinone by a one-electron transfer pathway. This is Na(+)-translocating NADH-quinone reductase subunit F from Chlamydia pneumoniae (Chlamydophila pneumoniae).